A 276-amino-acid polypeptide reads, in one-letter code: uncharacterized protein (276 aa).

The propeptide at 1 to 4 (MNRG) is leader sequence. Position 5 is an N-methylmethionine (Met-5). A helical transmembrane segment spans residues 5-26 (MTLIELLVALALSIILSLGLYY).

The protein localises to the membrane. This is an uncharacterized protein from Aquifex aeolicus (strain VF5).